The chain runs to 968 residues: Phosphoenolpyruvate carboxylase (968 aa).

A Phosphoserine modification is found at S11. Residues H172 and K602 contribute to the active site.

It belongs to the PEPCase type 1 family. In terms of assembly, homotetramer. The cofactor is Mg(2+).

The protein resides in the cytoplasm. The catalysed reaction is oxaloacetate + phosphate = phosphoenolpyruvate + hydrogencarbonate. By light-reversible phosphorylation. Through the carboxylation of phosphoenolpyruvate (PEP) it forms oxaloacetate, a four-carbon dicarboxylic acid source for the tricarboxylic acid cycle. The chain is Phosphoenolpyruvate carboxylase from Phaseolus vulgaris (Kidney bean).